The sequence spans 2187 residues: Nascent polypeptide-associated complex subunit alpha, muscle-specific form (2187 aa).

3 disordered regions span residues 1 to 20 (MPGE…PQPQ), 32 to 73 (LKVA…STPF), and 172 to 196 (IPPL…KGTA). The span at 9-20 (VPATEQELPQPQ) shows a compositional bias: polar residues. A compositionally biased stretch (polar residues) spans 178 to 192 (KTSTSQVPSQGTLNL). Asymmetric dimethylarginine is present on R247. Disordered stretches follow at residues 335-370 (DSGA…LSPK), 579-611 (NTVS…SPLV), 738-835 (PKGS…PKDT), 884-1847 (KETL…PVEK), and 1892-2053 (PEAV…KAMS). The segment covering 347 to 369 (SAVTNELCSPPGSSNVAGTSLSP) has biased composition (polar residues). Position 590 is a phosphothreonine (T590). Polar residues-rich tracts occupy residues 599 to 609 (AKNTAPSTTSP), 818 to 835 (VTPT…PKDT), and 887 to 905 (LATS…TPKS). Phosphoserine is present on S822. Positions 941-951 (PHVPPTSPPKS) are enriched in pro residues. Low complexity predominate over residues 976 to 998 (TPTYPKKSPKPAASKKTPATPSP). Residues 1106–1122 (TPQNATPNESLAASSQK) are compositionally biased toward polar residues. Phosphoserine is present on residues S1174 and S1177. Residues 1174–1195 (SPLSPKKASKTAAPKEAPATPS) show a composition bias toward low complexity. T1364 is modified (phosphothreonine). A phosphoserine mark is found at S1368 and S1392. T1398 is modified (phosphothreonine). Phosphoserine is present on residues S1400 and S1423. A compositionally biased stretch (polar residues) spans 1429-1440 (VTPSSKKLSQTV). A compositionally biased stretch (low complexity) spans 1489-1504 (SPSSPKKAPKTAAPPS). At S1492 the chain carries Phosphoserine. Residues 1609 to 1631 (PVTTSLAQTAPPSLQKAPSTTIP) are compositionally biased toward polar residues. 2 stretches are compositionally biased toward low complexity: residues 1636 to 1670 (AAPA…TAPK) and 1714 to 1727 (SSPP…KRAS). Over residues 1762–1772 (ACSTGTTTPQA) the composition is skewed to polar residues. Low complexity-rich tracts occupy residues 1806–1823 (KSPG…CPDP) and 1892–1914 (PEAV…LAPS). Positions 1950 to 1954 (PPLIP) match the PXLXP motif. Positions 1973–1983 (APKPAGTPAPA) are enriched in pro residues. Acidic residues predominate over residues 2001–2014 (SDSDESVPELEEQD). S2015 carries the phosphoserine; by ILK1 modification. Low complexity predominate over residues 2016–2029 (TQTATQQAQLAAAA). The tract at residues 2041-2052 (QSRSEKKARKAM) is required for DNA-binding. In terms of domain architecture, NAC-A/B spans 2042–2107 (SRSEKKARKA…AKIEDLSQQA (66 aa)). At S2104 the chain carries Phosphoserine. At K2114 the chain carries N6-acetyllysine; alternate. A Glycyl lysine isopeptide (Lys-Gly) (interchain with G-Cter in SUMO2); alternate cross-link involves residue K2114. Position 2131 is a phosphothreonine; by GSK3-beta (T2131). T2133 is subject to Phosphothreonine. S2138, S2158, S2163, and S2175 each carry phosphoserine. One can recognise a UBA domain in the interval 2148-2185 (VEVKDIELVMSQANVSRAKAVRALKNNSNDIVNAIMEL).

This sequence belongs to the NAC-alpha family. Interacts (via PXLXP motif) with the muscle-restricted histone methyltransferase SMYD1 (via MYND-type zinc finger). Post-translationally, phosphorylation of Ser-2015 by ILK during cell adhesion may promote nuclear localization. Phosphorylation of Thr-2131 by GSK3B may promote proteasome mediated degradation. As to expression, specifically expressed in heart and skeletal muscle: it is present in differentiated myotubes but not in myoblasts.

It is found in the cytoplasm. The protein resides in the nucleus. Its function is as follows. Cardiac- and muscle-specific transcription factor. May act to regulate the expression of genes involved in the development of myotubes. Plays a critical role in ventricular cardiomyocyte expansion and regulates postnatal skeletal muscle growth and regeneration. Involved in the organized assembly of thick and thin filaments of myofibril sarcomeres. This chain is Nascent polypeptide-associated complex subunit alpha, muscle-specific form (Naca), found in Mus musculus (Mouse).